The chain runs to 152 residues: Large ribosomal subunit protein bL34c (152 aa).

The N-terminal 91 residues, 1–91 (MATLSLLSTG…DRCRRFVVRA (91 aa)), are a transit peptide targeting the chloroplast.

As to quaternary structure, component of the chloroplast large ribosomal subunit (LSU). Mature 70S chloroplast ribosomes of higher plants consist of a small (30S) and a large (50S) subunit. The 30S small subunit contains 1 molecule of ribosomal RNA (16S rRNA) and 24 different proteins. The 50S large subunit contains 3 rRNA molecules (23S, 5S and 4.5S rRNA) and 33 different proteins.

The protein resides in the plastid. Its subcellular location is the chloroplast. Its function is as follows. Component of the chloroplast ribosome (chloro-ribosome), a dedicated translation machinery responsible for the synthesis of chloroplast genome-encoded proteins, including proteins of the transcription and translation machinery and components of the photosynthetic apparatus. This Spinacia oleracea (Spinach) protein is Large ribosomal subunit protein bL34c (RPL34).